The sequence spans 436 residues: tRNA modification GTPase MnmE (436 aa).

Arginine 20, glutamate 77, and lysine 117 together coordinate (6S)-5-formyl-5,6,7,8-tetrahydrofolate. In terms of domain architecture, TrmE-type G spans 214-360; it reads GLKIVIAGAP…FIKELESFCL (147 aa). GTP-binding positions include 224 to 229, 243 to 249, and 268 to 271; these read NSGKSS, MEEAGTT, and DTAG. Mg(2+) is bound by residues serine 228 and threonine 249. Residue lysine 436 coordinates (6S)-5-formyl-5,6,7,8-tetrahydrofolate.

The protein belongs to the TRAFAC class TrmE-Era-EngA-EngB-Septin-like GTPase superfamily. TrmE GTPase family. In terms of assembly, homodimer. Heterotetramer of two MnmE and two MnmG subunits. The cofactor is K(+).

The protein localises to the cytoplasm. Its function is as follows. Exhibits a very high intrinsic GTPase hydrolysis rate. Involved in the addition of a carboxymethylaminomethyl (cmnm) group at the wobble position (U34) of certain tRNAs, forming tRNA-cmnm(5)s(2)U34. The protein is tRNA modification GTPase MnmE of Bartonella quintana (strain Toulouse) (Rochalimaea quintana).